Reading from the N-terminus, the 131-residue chain is Snaclec bitiscetin subunit alpha (131 aa).

Intrachain disulfides connect cysteine 4–cysteine 15, cysteine 32–cysteine 125, and cysteine 100–cysteine 117. In terms of domain architecture, C-type lectin spans 11–126 (YKGHCYKVFK…CGEKNPFICK (116 aa)).

The protein belongs to the snaclec family. In terms of assembly, heterodimer of subunits alpha and beta; disulfide-linked. As to expression, expressed by the venom gland.

It localises to the secreted. In terms of biological role, snaclec that binds to von Willebrand factor (VWF) and induces its interaction with GPIbalpha (GP1BA) (via the vWF A1 domain), resulting in platelet aggregation. The polypeptide is Snaclec bitiscetin subunit alpha (Bitis arietans (African puff adder)).